A 185-amino-acid polypeptide reads, in one-letter code: MAEAKYEPRLKKEYVERIRKALQEQFSYANEMMIPKLDKIVINMGVGEATADSKKPTVAAADLAAIAGQKPVITRARNSIAGFKVREQMPIGAKVTLRGARMYEFMDRLVNIALPRVRDFRGLNPKSFDGRGNFAMGIKEHIVFPEINYDKVDQMWGMDIIVCTTATTDDEARALLKEFSFPFRQ.

Belongs to the universal ribosomal protein uL5 family. As to quaternary structure, part of the 50S ribosomal subunit; part of the 5S rRNA/L5/L18/L25 subcomplex. Contacts the 5S rRNA and the P site tRNA. Forms a bridge to the 30S subunit in the 70S ribosome.

Functionally, this is one of the proteins that bind and probably mediate the attachment of the 5S RNA into the large ribosomal subunit, where it forms part of the central protuberance. In the 70S ribosome it contacts protein S13 of the 30S subunit (bridge B1b), connecting the 2 subunits; this bridge is implicated in subunit movement. Contacts the P site tRNA; the 5S rRNA and some of its associated proteins might help stabilize positioning of ribosome-bound tRNAs. The sequence is that of Large ribosomal subunit protein uL5 from Rhizobium johnstonii (strain DSM 114642 / LMG 32736 / 3841) (Rhizobium leguminosarum bv. viciae).